Consider the following 588-residue polypeptide: Outer membrane transporter CdiB (588 aa).

The chain crosses the membrane as a helical span at residues 33 to 55 (VVRYFSLLPCLCILSFSSPAAML). The region spanning 104 to 179 (FTVSRIVVSG…GVLHITVMEG (76 aa)) is the POTRA domain.

It belongs to the TPS (TC 1.B.20) family.

It localises to the cell outer membrane. In terms of biological role, potential outer membrane protein component of a toxin-immunity protein module, which functions as a cellular contact-dependent growth inhibition (CDI) system. CDI modules allow bacteria to communicate with and inhibit the growth of closely related neighboring bacteria in a contact-dependent fashion. This protein may be required for secretion and assembly of the CdiA toxin protein. Functionally, probable member of a two partner secretion pathway (TPS) in which it mediates the secretion of CdiA. The sequence is that of Outer membrane transporter CdiB from Escherichia coli O6:K15:H31 (strain 536 / UPEC).